The primary structure comprises 1450 residues: DNA-directed RNA polymerase RPB1 homolog (1450 aa).

Belongs to the RNA polymerase beta' chain family. As to quaternary structure, part of the viral DNA-directed RNA polymerase that consists of 8 polII-like subunits (RPB1, RPB2, RPB3, RPB5, RPB6, RPB7, RPB9, RPB10), a capping enzyme and a termination factor.

It is found in the virion. The catalysed reaction is RNA(n) + a ribonucleoside 5'-triphosphate = RNA(n+1) + diphosphate. Its function is as follows. Catalytic component of the DNA-directed RNA polymerase (RNAP) that catalyzes the transcription in the cytoplasm of viral DNA into RNA using the four ribonucleoside triphosphates as substrates. Forms the polymerase active center together with RPB2. Part of the core element with the central large cleft, the clamp element that moves to open and close the cleft and the jaws that are thought to grab the incoming DNA template. In Ornithodoros (relapsing fever ticks), this protein is DNA-directed RNA polymerase RPB1 homolog.